Reading from the N-terminus, the 158-residue chain is Protein NrdI (158 aa).

The protein belongs to the NrdI family.

Probably involved in ribonucleotide reductase function. In Rhodococcus jostii (strain RHA1), this protein is Protein NrdI.